We begin with the raw amino-acid sequence, 275 residues long: 2-dehydro-3-deoxyphosphooctonate aldolase (275 aa).

It belongs to the KdsA family.

Its subcellular location is the cytoplasm. The catalysed reaction is D-arabinose 5-phosphate + phosphoenolpyruvate + H2O = 3-deoxy-alpha-D-manno-2-octulosonate-8-phosphate + phosphate. The protein operates within carbohydrate biosynthesis; 3-deoxy-D-manno-octulosonate biosynthesis; 3-deoxy-D-manno-octulosonate from D-ribulose 5-phosphate: step 2/3. Its pathway is bacterial outer membrane biogenesis; lipopolysaccharide biosynthesis. The protein is 2-dehydro-3-deoxyphosphooctonate aldolase of Francisella philomiragia subsp. philomiragia (strain ATCC 25017 / CCUG 19701 / FSC 153 / O#319-036).